The sequence spans 1373 residues: DNA-directed RNA polymerase subunit beta (1373 aa).

It belongs to the RNA polymerase beta chain family. As to quaternary structure, the RNAP catalytic core consists of 2 alpha, 1 beta, 1 beta' and 1 omega subunit. When a sigma factor is associated with the core the holoenzyme is formed, which can initiate transcription.

It catalyses the reaction RNA(n) + a ribonucleoside 5'-triphosphate = RNA(n+1) + diphosphate. Its function is as follows. DNA-dependent RNA polymerase catalyzes the transcription of DNA into RNA using the four ribonucleoside triphosphates as substrates. The chain is DNA-directed RNA polymerase subunit beta from Rickettsia felis (strain ATCC VR-1525 / URRWXCal2) (Rickettsia azadi).